Reading from the N-terminus, the 88-residue chain is Small ribosomal subunit protein bS20 (88 aa).

Belongs to the bacterial ribosomal protein bS20 family.

In terms of biological role, binds directly to 16S ribosomal RNA. This chain is Small ribosomal subunit protein bS20, found in Clostridium novyi (strain NT).